The primary structure comprises 329 residues: Two pore potassium channel protein sup-9 (329 aa).

The Cytoplasmic portion of the chain corresponds to 1 to 8 (MKRQNIRT). The chain crosses the membrane as a helical span at residues 9–29 (LSLIVCTLTYLLVGAAVFDAL). Asn53 is a glycosylation site (N-linked (GlcNAc...) asparagine). An intramembrane region (pore-forming) is located at residues 80 to 100 (FSGAFYFATTVITTIGYGHST). Residues 93–98 (TIGYGH) carry the Selectivity filter motif. A helical transmembrane segment spans residues 108–128 (VFCMLYALAGIPLGLIMFQSI). Topologically, residues 129 to 157 (GERMNTFAAKLLRFIRRAAGKQPIVTSSD) are cytoplasmic. Residues 158–178 (LIIFCTGWGGLLIFGGAFMFS) form a helical membrane-spanning segment. Asn182 is a glycosylation site (N-linked (GlcNAc...) asparagine). The pore-forming intramembrane region spans 186–206 (FDAVYYCFVTLTTIGFGDYVA). A Selectivity filter motif is present at residues 198-203 (TIGFGD). The chain crosses the membrane as a helical span at residues 220–240 (VFFSLVFILFGLTVISAAMNL). Residues 241–329 (LVLRFLTMNT…FSGMTTRPKY (89 aa)) are Cytoplasmic-facing. A may be important for regulation by and/or interaction with sup-10 region spans residues 289–296 (SLASCSCY). Positions 307 to 329 (HRKHTEPHGGPPTFSGMTTRPKY) are disordered.

It belongs to the two pore domain potassium channel (TC 1.A.1.8) family. As to quaternary structure, may form a complex with the regulatory subunits unc-93 and sup-10. Low levels along surface of body-wall muscle cells, in vulval and intestinal muscles and, more weakly, in anal depressor and sphincter muscles. Also expressed in a subset of head neurons.

The protein resides in the membrane. Its function is as follows. Potassium channel involved in coordination of muscle contraction. Activity is regulated by sup-18. The polypeptide is Two pore potassium channel protein sup-9 (Caenorhabditis elegans).